Consider the following 214-residue polypeptide: tRNA (guanine-N(7)-)-methyltransferase (214 aa).

4 residues coordinate S-adenosyl-L-methionine: E44, E69, D96, and D118. The active site involves D118. Substrate-binding positions include K122, D154, and 191–194 (TEYE).

Belongs to the class I-like SAM-binding methyltransferase superfamily. TrmB family.

It catalyses the reaction guanosine(46) in tRNA + S-adenosyl-L-methionine = N(7)-methylguanosine(46) in tRNA + S-adenosyl-L-homocysteine. The protein operates within tRNA modification; N(7)-methylguanine-tRNA biosynthesis. Catalyzes the formation of N(7)-methylguanine at position 46 (m7G46) in tRNA. The protein is tRNA (guanine-N(7)-)-methyltransferase of Listeria monocytogenes serotype 4a (strain HCC23).